The following is a 226-amino-acid chain: Ribonuclease 3 (226 aa).

Residues 6-128 (INRLQRKLGY…LIGGVFLDSN (123 aa)) enclose the RNase III domain. Residue glutamate 41 participates in Mg(2+) binding. Residue aspartate 45 is part of the active site. Residues aspartate 114 and glutamate 117 each contribute to the Mg(2+) site. The active site involves glutamate 117. A DRBM domain is found at 155–225 (DPKTRLQEYL…AEQALKKLEL (71 aa)).

Belongs to the ribonuclease III family. As to quaternary structure, homodimer. Mg(2+) is required as a cofactor.

The protein resides in the cytoplasm. It catalyses the reaction Endonucleolytic cleavage to 5'-phosphomonoester.. Functionally, digests double-stranded RNA. Involved in the processing of primary rRNA transcript to yield the immediate precursors to the large and small rRNAs (23S and 16S). Processes some mRNAs, and tRNAs when they are encoded in the rRNA operon. Processes pre-crRNA and tracrRNA of type II CRISPR loci if present in the organism. The protein is Ribonuclease 3 of Salmonella typhi.